The sequence spans 352 residues: Sphingosine 1-phosphate receptor 2 (352 aa).

Over 1–34 (MGGLYSEYLNPEKVQEHYNYTKETLDMQETPSRK) the chain is Extracellular. An N-linked (GlcNAc...) asparagine glycan is attached at asparagine 19. The chain crosses the membrane as a helical span at residues 35–59 (VASAFIIILCCAIVVENLLVLIAVA). Topologically, residues 60 to 66 (RNSKFHS) are cytoplasmic. The chain crosses the membrane as a helical span at residues 67–95 (AMYLFLGNLAASDLLAGVAFVANTLLSGP). The Extracellular portion of the chain corresponds to 96 to 109 (VTLSLTPLQWFARE). The helical transmembrane segment at 110–128 (GSAFITLSASVFSLLAIAI) threads the bilayer. Topologically, residues 129-147 (ERQVAIAKVKLYGSDKSCR) are cytoplasmic. The helical transmembrane segment at 148–173 (MLMLIGASWLISLILGGLPILGWNCL) threads the bilayer. Residues 174–189 (DHLEACSTVLPLYAKH) are Extracellular-facing. The helical transmembrane segment at 190–210 (YVLCVVTIFSVILLAIVALYV) threads the bilayer. Residues 211–233 (RIYFVVRSSHADVAGPQTLALLK) lie on the Cytoplasmic side of the membrane. The helical transmembrane segment at 234–255 (TVTIVLGVFIICWLPAFSILLL) threads the bilayer. At 256 to 271 (DSTCPVRACPVLYKAH) the chain is on the extracellular side. Residues 272 to 292 (YFFAFATLNSLLNPVIYTWRS) traverse the membrane as a helical segment. Topologically, residues 293–352 (RDLRREVLRPLLCWRQGKGATGRRGGNPGHRLLPLRSSSSLERGLHMPTSPTFLEGNTVV) are cytoplasmic. Cysteine 305 carries S-palmitoyl cysteine lipidation.

Belongs to the G-protein coupled receptor 1 family. Expressed in all developing tissues with highest levels detected in primitive, transformed cells. Relative abundance: lung &gt; kidney = skin = gut &gt; spleen &gt; brain &gt; liver.

Its subcellular location is the cell membrane. Functionally, receptor for the lysosphingolipid sphingosine 1-phosphate (S1P). S1P is a bioactive lysophospholipid that elicits diverse physiological effects on most types of cells and tissues. Receptor for the chemokine-like protein FAM19A5. Mediates the inhibitory effect of FAM19A5 on vascular smooth muscle cell proliferation and migration. In lymphoid follicles, couples the binding of S1P to the activation of GNA13 and downstream inhibition of AKT activation leading to suppression of germinal center (GC) B cell growth and migration outside the GC niche. This is Sphingosine 1-phosphate receptor 2 (S1pr2) from Rattus norvegicus (Rat).